Consider the following 141-residue polypeptide: Nucleoside diphosphate kinase (141 aa).

ATP-binding residues include lysine 11, phenylalanine 59, arginine 87, threonine 93, arginine 104, and asparagine 114. Histidine 117 (pros-phosphohistidine intermediate) is an active-site residue.

The protein belongs to the NDK family. As to quaternary structure, homotetramer. Mg(2+) serves as cofactor.

Its subcellular location is the cytoplasm. It catalyses the reaction a 2'-deoxyribonucleoside 5'-diphosphate + ATP = a 2'-deoxyribonucleoside 5'-triphosphate + ADP. The catalysed reaction is a ribonucleoside 5'-diphosphate + ATP = a ribonucleoside 5'-triphosphate + ADP. In terms of biological role, major role in the synthesis of nucleoside triphosphates other than ATP. The ATP gamma phosphate is transferred to the NDP beta phosphate via a ping-pong mechanism, using a phosphorylated active-site intermediate. The protein is Nucleoside diphosphate kinase of Vibrio campbellii (strain ATCC BAA-1116).